A 388-amino-acid polypeptide reads, in one-letter code: tRNA(Ile)-lysidine synthase (388 aa).

51–56 serves as a coordination point for ATP; it reads SGGRDS.

Belongs to the tRNA(Ile)-lysidine synthase family.

The protein localises to the cytoplasm. It catalyses the reaction cytidine(34) in tRNA(Ile2) + L-lysine + ATP = lysidine(34) in tRNA(Ile2) + AMP + diphosphate + H(+). In terms of biological role, ligates lysine onto the cytidine present at position 34 of the AUA codon-specific tRNA(Ile) that contains the anticodon CAU, in an ATP-dependent manner. Cytidine is converted to lysidine, thus changing the amino acid specificity of the tRNA from methionine to isoleucine. The protein is tRNA(Ile)-lysidine synthase of Bifidobacterium longum subsp. infantis (strain ATCC 15697 / DSM 20088 / JCM 1222 / NCTC 11817 / S12).